Reading from the N-terminus, the 186-residue chain is Elongation factor P (186 aa).

It belongs to the elongation factor P family.

The protein localises to the cytoplasm. Its pathway is protein biosynthesis; polypeptide chain elongation. Involved in peptide bond synthesis. Stimulates efficient translation and peptide-bond synthesis on native or reconstituted 70S ribosomes in vitro. Probably functions indirectly by altering the affinity of the ribosome for aminoacyl-tRNA, thus increasing their reactivity as acceptors for peptidyl transferase. The protein is Elongation factor P of Streptococcus gordonii (strain Challis / ATCC 35105 / BCRC 15272 / CH1 / DL1 / V288).